The following is a 314-amino-acid chain: Putative S-adenosyl-L-methionine-dependent methyltransferase MMAR_5323 (314 aa).

Residues Asp132 and 161–162 (DL) contribute to the S-adenosyl-L-methionine site.

The protein belongs to the UPF0677 family.

In terms of biological role, exhibits S-adenosyl-L-methionine-dependent methyltransferase activity. The protein is Putative S-adenosyl-L-methionine-dependent methyltransferase MMAR_5323 of Mycobacterium marinum (strain ATCC BAA-535 / M).